The chain runs to 641 residues: Pumilio homolog 24 (641 aa).

The interval 1-82 (MSSKGLKPQK…LTEARKKKRK (82 aa)) is disordered. In terms of domain architecture, PUM-HD spans 9-404 (QKSTKRKDTD…RPLLQLLHPN (396 aa)). 2 stretches are compositionally biased toward basic and acidic residues: residues 14–27 (RKDT…DSLK) and 67–76 (RVQAKELTEA). Pumilio repeat units lie at residues 118–153 (KMKG…VLFT), 154–189 (ELQP…ACIS), 190–225 (SLRG…ELLA), 303–340 (QLLT…KIIK), and 341–378 (AMKE…IIVR). The disordered stretch occupies residues 427-468 (MDKSETSSKTKDTDGNEIGEETKDEQEDTVAEHSDHEENVTA). Basic and acidic residues predominate over residues 428–440 (DKSETSSKTKDTD). A compositionally biased stretch (acidic residues) spans 441–455 (GNEIGEETKDEQEDT). The span at 456-468 (VAEHSDHEENVTA) shows a compositional bias: basic and acidic residues.

Its subcellular location is the nucleus. The protein resides in the nucleolus. Functionally, sequence-specific RNA-binding protein that regulates translation and mRNA stability by binding the 3'-UTR of target mRNAs. In Arabidopsis thaliana (Mouse-ear cress), this protein is Pumilio homolog 24 (APUM24).